A 521-amino-acid polypeptide reads, in one-letter code: 2-isopropylmalate synthase (521 aa).

Positions 5 to 267 (VIIFDTTLRD…HTNIKHQEIH (263 aa)) constitute a Pyruvate carboxyltransferase domain. Mn(2+) is bound by residues aspartate 14, histidine 202, histidine 204, and asparagine 238. The interval 392–521 (KLNYLSVQSG…FAQKTVMETL (130 aa)) is regulatory domain.

The protein belongs to the alpha-IPM synthase/homocitrate synthase family. LeuA type 1 subfamily. In terms of assembly, homodimer. Mn(2+) is required as a cofactor.

It localises to the cytoplasm. It carries out the reaction 3-methyl-2-oxobutanoate + acetyl-CoA + H2O = (2S)-2-isopropylmalate + CoA + H(+). It participates in amino-acid biosynthesis; L-leucine biosynthesis; L-leucine from 3-methyl-2-oxobutanoate: step 1/4. Catalyzes the condensation of the acetyl group of acetyl-CoA with 3-methyl-2-oxobutanoate (2-ketoisovalerate) to form 3-carboxy-3-hydroxy-4-methylpentanoate (2-isopropylmalate). This chain is 2-isopropylmalate synthase, found in Tolumonas auensis (strain DSM 9187 / NBRC 110442 / TA 4).